We begin with the raw amino-acid sequence, 273 residues long: Formamidopyrimidine-DNA glycosylase (273 aa).

The active-site Schiff-base intermediate with DNA is the P2. Catalysis depends on E3, which acts as the Proton donor. The active-site Proton donor; for beta-elimination activity is K57. Residues H90, R109, and K150 each coordinate DNA. The FPG-type zinc-finger motif lies at 235-269 (KVYGRAGKECPVCSSKIEEEKIGQRNSFWCGKCQF). R259 functions as the Proton donor; for delta-elimination activity in the catalytic mechanism.

It belongs to the FPG family. As to quaternary structure, monomer. Zn(2+) is required as a cofactor.

The catalysed reaction is Hydrolysis of DNA containing ring-opened 7-methylguanine residues, releasing 2,6-diamino-4-hydroxy-5-(N-methyl)formamidopyrimidine.. It carries out the reaction 2'-deoxyribonucleotide-(2'-deoxyribose 5'-phosphate)-2'-deoxyribonucleotide-DNA = a 3'-end 2'-deoxyribonucleotide-(2,3-dehydro-2,3-deoxyribose 5'-phosphate)-DNA + a 5'-end 5'-phospho-2'-deoxyribonucleoside-DNA + H(+). Functionally, involved in base excision repair of DNA damaged by oxidation or by mutagenic agents. Acts as a DNA glycosylase that recognizes and removes damaged bases. Has a preference for oxidized purines, such as 7,8-dihydro-8-oxoguanine (8-oxoG). Has AP (apurinic/apyrimidinic) lyase activity and introduces nicks in the DNA strand. Cleaves the DNA backbone by beta-delta elimination to generate a single-strand break at the site of the removed base with both 3'- and 5'-phosphates. This is Formamidopyrimidine-DNA glycosylase from Aliivibrio fischeri (strain MJ11) (Vibrio fischeri).